Here is a 269-residue protein sequence, read N- to C-terminus: UPF0524 protein C3orf70 homolog A (269 aa).

Disordered stretches follow at residues 139-203 and 215-249; these read VQRP…DSGI and DEDS…QDEC. A compositionally biased stretch (pro residues) spans 141–150; the sequence is RPPPPTPNPT. Residues 151 to 164 are compositionally biased toward low complexity; it reads HQPQTAAPQPVPQR. Basic and acidic residues predominate over residues 179-191; it reads QAKEKISAPKMDH. Acidic residues predominate over residues 215-233; sequence DEDSCVDDDDEEEEDDELS.

This sequence belongs to the UPF0524 family.

Functionally, plays a role in neuronal and neurobehavioral development. Required for normal expression of neuronal markers elavl3 and eno2 and neurobehaviors related to circadian rhythm and changes in light-dark conditions. This is UPF0524 protein C3orf70 homolog A from Danio rerio (Zebrafish).